We begin with the raw amino-acid sequence, 135 residues long: 6,7-dimethyl-8-ribityllumazine synthase (135 aa).

5-amino-6-(D-ribitylamino)uracil is bound by residues F12, 44-46 (AYD), and 68-70 (CVI). Position 73-74 (73-74 (AT)) interacts with (2S)-2-hydroxy-3-oxobutyl phosphate. The active-site Proton donor is the H76. Position 101 (L101) interacts with 5-amino-6-(D-ribitylamino)uracil. Position 116 (R116) interacts with (2S)-2-hydroxy-3-oxobutyl phosphate.

It belongs to the DMRL synthase family.

It carries out the reaction (2S)-2-hydroxy-3-oxobutyl phosphate + 5-amino-6-(D-ribitylamino)uracil = 6,7-dimethyl-8-(1-D-ribityl)lumazine + phosphate + 2 H2O + H(+). It functions in the pathway cofactor biosynthesis; riboflavin biosynthesis; riboflavin from 2-hydroxy-3-oxobutyl phosphate and 5-amino-6-(D-ribitylamino)uracil: step 1/2. Functionally, catalyzes the formation of 6,7-dimethyl-8-ribityllumazine by condensation of 5-amino-6-(D-ribitylamino)uracil with 3,4-dihydroxy-2-butanone 4-phosphate. This is the penultimate step in the biosynthesis of riboflavin. The polypeptide is 6,7-dimethyl-8-ribityllumazine synthase (Methanoculleus marisnigri (strain ATCC 35101 / DSM 1498 / JR1)).